The following is a 357-amino-acid chain: Protein RecA (357 aa).

Residue 67 to 74 participates in ATP binding; the sequence is GPESSGKT. Residues 335-357 are disordered; the sequence is LSSSASDDENSEGNVDFETGEVF.

Belongs to the RecA family.

It is found in the cytoplasm. Can catalyze the hydrolysis of ATP in the presence of single-stranded DNA, the ATP-dependent uptake of single-stranded DNA by duplex DNA, and the ATP-dependent hybridization of homologous single-stranded DNAs. It interacts with LexA causing its activation and leading to its autocatalytic cleavage. In Shewanella sp. (strain MR-4), this protein is Protein RecA.